The chain runs to 174 residues: Shikimate kinase (174 aa).

15–20 (GTGKST) lines the ATP pocket. S19 is a binding site for Mg(2+). Substrate-binding residues include D37, R61, and G82. Residue R120 participates in ATP binding. R138 is a substrate binding site.

This sequence belongs to the shikimate kinase family. In terms of assembly, monomer. Requires Mg(2+) as cofactor.

Its subcellular location is the cytoplasm. It catalyses the reaction shikimate + ATP = 3-phosphoshikimate + ADP + H(+). It participates in metabolic intermediate biosynthesis; chorismate biosynthesis; chorismate from D-erythrose 4-phosphate and phosphoenolpyruvate: step 5/7. Its function is as follows. Catalyzes the specific phosphorylation of the 3-hydroxyl group of shikimic acid using ATP as a cosubstrate. In Staphylococcus aureus (strain MSSA476), this protein is Shikimate kinase.